The primary structure comprises 1696 residues: uncharacterized protein (1696 aa).

Disordered stretches follow at residues 1–113 (MDSS…HPQY), 151–194 (DSWT…SRSR), 258–284 (DVTR…PEKK), and 299–376 (GRRE…KQRG). Over residues 21-42 (LHPPSAPLPPPPPLPPPPPPRQ) the composition is skewed to pro residues. Over residues 52 to 61 (GRSTQSNGQR) the composition is skewed to polar residues. Residues 96-113 (QQQHQPLSLQQQQQHPQY) are compositionally biased toward low complexity. Over residues 170–183 (RNYQYDYSRNSSGV) the composition is skewed to polar residues. Composition is skewed to basic and acidic residues over residues 267–284 (EGAR…PEKK), 325–340 (ETPR…EWSR), and 358–376 (RGKE…KQRG). S378 is subject to Phosphoserine. 7 disordered regions span residues 419–483 (RALL…GGKL), 688–724 (SDIG…LDSP), 1063–1090 (IKHK…GGTS), 1184–1211 (TSKS…VAGS), 1319–1340 (GEAV…SGVR), 1361–1429 (VVSV…SDAS), and 1658–1696 (SESR…DSGM). 2 stretches are compositionally biased toward basic and acidic residues: residues 421 to 436 (LLSD…ERNG) and 695 to 704 (DDNKRIDKNV). Residue S708 is modified to Phosphoserine. A compositionally biased stretch (basic and acidic residues) spans 1184–1204 (TSKSIEKIESSGGTSEHRTPE). Residues 1361-1370 (VVSVPHRDPQ) are compositionally biased toward basic and acidic residues. Polar residues-rich tracts occupy residues 1389-1398 (NYSTQKSYPS), 1658-1667 (SESRCNQSIS), and 1677-1696 (SAAN…DSGM).

This is an uncharacterized protein from Arabidopsis thaliana (Mouse-ear cress).